Here is a 189-residue protein sequence, read N- to C-terminus: Putative dihydrofolate reductase (189 aa).

A DHFR domain is found at 3–185; the sequence is KMNLIVAMDA…LKFEFCKWKV (183 aa). Residues alanine 9 and 15–21 contribute to the NADP(+) site; that span reads GIGKNGV. 29–34 lines the substrate pocket; it reads DMQYFA. Residue 53 to 55 coordinates NADP(+); the sequence is RKC. Arginine 69 is a binding site for substrate. Residues 75-77 and 115-122 each bind NADP(+); these read SRQ and GGAEIYDL.

This sequence belongs to the dihydrofolate reductase family.

It carries out the reaction (6S)-5,6,7,8-tetrahydrofolate + NADP(+) = 7,8-dihydrofolate + NADPH + H(+). It participates in cofactor biosynthesis; tetrahydrofolate biosynthesis; 5,6,7,8-tetrahydrofolate from 7,8-dihydrofolate: step 1/1. Its function is as follows. Key enzyme in folate metabolism. Catalyzes an essential reaction for de novo glycine and purine synthesis, and for DNA precursor synthesis. The protein is Putative dihydrofolate reductase (dhfr-1) of Caenorhabditis elegans.